Reading from the N-terminus, the 374-residue chain is MKFIDEVRIHVASGNGGHGAVSFRREKFIPFGGPDGGDGGRGGSVYLVAQASLNTLIDFRYQRRYRAENGHGGAGRQMTGRAGHDLEIKVPVGTLVYDDDTHELLGDLRFEGERLLIARSGRGGHGNLFYKSSTNRAPRQFEKGGAGEERDLRLELRLLADVGLLGLPNAGKSTLIRAVSAARPKVADYPFTTLYPNLGVVRVAAHESFVLADIPGLIPGASEGAGLGTRFLKHLSRTRLLLHLVDMAPVDGSDPAMNIRALEMELAAYSPTLAARPRWLVVNKSDLLPGEEAEARFQQICTALQWESPAFLISAASGAGCEALVYAIWQALPDLPPAADPTQTEDWGDESDAGERLENWEGDDLDADWEEEQV.

Positions 1–159 (MKFIDEVRIH…RDLRLELRLL (159 aa)) constitute an Obg domain. One can recognise an OBG-type G domain in the interval 160–333 (ADVGLLGLPN…LVYAIWQALP (174 aa)). GTP-binding positions include 166–173 (GLPNAGKS), 191–195 (FTTLY), 213–216 (DIPG), 283–286 (NKSD), and 314–316 (SAA). 2 residues coordinate Mg(2+): serine 173 and threonine 193. The interval 337–374 (PAADPTQTEDWGDESDAGERLENWEGDDLDADWEEEQV) is disordered. Over residues 360 to 374 (WEGDDLDADWEEEQV) the composition is skewed to acidic residues.

Belongs to the TRAFAC class OBG-HflX-like GTPase superfamily. OBG GTPase family. In terms of assembly, monomer. It depends on Mg(2+) as a cofactor.

The protein localises to the cytoplasm. An essential GTPase which binds GTP, GDP and possibly (p)ppGpp with moderate affinity, with high nucleotide exchange rates and a fairly low GTP hydrolysis rate. Plays a role in control of the cell cycle, stress response, ribosome biogenesis and in those bacteria that undergo differentiation, in morphogenesis control. This is GTPase Obg from Acidithiobacillus ferrooxidans (strain ATCC 23270 / DSM 14882 / CIP 104768 / NCIMB 8455) (Ferrobacillus ferrooxidans (strain ATCC 23270)).